The chain runs to 144 residues: Large ribosomal subunit protein uL22 (144 aa).

A disordered region spans residues 123 to 144; it reads ELVKKRTMGHKKEKAKQKQKQQ. The segment covering 125–144 has biased composition (basic residues); that stretch reads VKKRTMGHKKEKAKQKQKQQ.

Belongs to the universal ribosomal protein uL22 family. In terms of assembly, part of the 50S ribosomal subunit.

In terms of biological role, this protein binds specifically to 23S rRNA; its binding is stimulated by other ribosomal proteins, e.g. L4, L17, and L20. It is important during the early stages of 50S assembly. It makes multiple contacts with different domains of the 23S rRNA in the assembled 50S subunit and ribosome. Its function is as follows. The globular domain of the protein is located near the polypeptide exit tunnel on the outside of the subunit, while an extended beta-hairpin is found that lines the wall of the exit tunnel in the center of the 70S ribosome. The polypeptide is Large ribosomal subunit protein uL22 (Mycoplasma genitalium (strain ATCC 33530 / DSM 19775 / NCTC 10195 / G37) (Mycoplasmoides genitalium)).